The following is a 425-amino-acid chain: Histone-binding protein RBBP4-A (425 aa).

Ala2 carries the post-translational modification N-acetylalanine. WD repeat units lie at residues 32-125 (YDLV…THDG), 126-175 (EVNR…RLRG), 176-223 (HQKE…KTIF), 225-270 (GHTA…HSVD), 271-314 (AHTA…HSFE), 315-371 (SHKD…FIHG), and 372-404 (GHTAKISDFSWNPNEPWVICSVSEDNIMQVWQM).

It belongs to the WD repeat RBAP46/RBAP48/MSI1 family. As to quaternary structure, binds directly to histone H4, probably via helix 1 of the histone fold, a region that is not accessible when histone H4 is in chromatin. Probably forms a large corepressor complex that contains ncor1, sin3a, hdac1-A and/or hdac1-B, hdac2, rbbp4-A and/or rbbp4-B and possibly rbbp7.

Its subcellular location is the nucleus. It is found in the chromosome. The protein localises to the telomere. Its function is as follows. Core histone-binding subunit that may target chromatin assembly factors, chromatin remodeling factors and histone deacetylases to their histone substrates in a manner that is regulated by nucleosomal DNA. Component of several complexes which regulate chromatin metabolism. This chain is Histone-binding protein RBBP4-A (rbbp4-a), found in Xenopus laevis (African clawed frog).